The following is a 1410-amino-acid chain: MKDLLKFLKQQSKTEEFNGIKIGLASPDLIRSWSFGEVKKPETINYRTFKPEREGLFCARIFGPVKDYECLCGKYKRLKHRGVICEKCGVEVTQTKVRRERMGHIDLASPVAHIWFLKSLPSRIGLMLDMTLRDIERVLYFESFVVIEPGMTTLERGQMLTEETYLDALEEYGDEFEAKMGAEAVLELLRAINLEEQIEQMREELPSINSETRRKKVTKRLKLMEAFFTSGNKPEWMILKVLPVLPPDLRPLVPLDGGRFATSDLNDLYRRVINRNNRLKRLLDLAAPDIIVRNEKRMLQESVDALLDNGRRGRAITGSNKRPLKSLADMIKGKQGRFRQNLLGKRVDYSGRSVITVGPTLRLHQCGLPKKMALELFKPFIYGKLEGRGLATTIKAAKKMVEREQAEVWDVLDEVIREHPVMLNRAPTLHRLGIQAFEPVLIEGKAIQLHPLVCAAYNADFDGDQMAVHVPLTLEAQLEARALMMSTNNILSPANGEPVITPSQDVVLGLYYTSRERINGRGEGMVFADVSEVEKAYATGVAEIHARVKVRITETSIDADGEKTKATRIVDTTIGRALLSLILPEGLSYDLVNQNMGKKQISKLLNTCYRQLGLKDTVIFADQLMYTGFRFATISGASVGIDDMVIPDEKYTLVADAEAEVLEIQEQFQSGLVTAGERYNKVIDIWASANEKVSKAMMENLSVETVINRDGVEEKQASFNSIYMMADSGARGSAAQIRQLAGMRGLMAKPDGSIIETPITANFREGLNVLQYFISTHGARKGLADTALKTANSGYLTRRLVDVAQDLVVIEDDCGAEHGLTMKPLIEGGDVVEPLRERVLGRVVAIDVIKPGSEEILAPRNTLLDEAWCDILEEHSVDEVIVRSVITCETDFGVCAACYGRDLARGHIINHGEAIGVVAAQSIGEPGTQLTMRTFHIGGAASRASAENNVQVKNAGSLKLHNAKHVSNIDGKLVIVSRSSELAIIDELGREKERYKVPYGTVLEKLEDSEVTAGEIIANWDPHTHPIISEVAGSVKFVDMIDGVTMTRQTDELTGLSSVVVLDVGARTSAGKELRPAIRLVGADGNDLMIPGTDVPAQYFLPGNAIVAKDDNAKINVGDALARIPQESSKTRDITGGLPRVADLFEARKPKEPAILAEISGTISFGKETKGKRRLVITPADGSEHYEEMIPKWRNLNVFEGEKVERGEVIADGPEAAHDILRLRGIHNVANYIVNEVQDVYRLQGVKINDKHIEVIIRQMLRKCLITSAGDTEFLEGEQAEVARVKIANRELIAQGKTPATFERELLGITKASLATESFISAASFQETTRVLTEAAVGGKSDQLRGLKENVIVGRLIPAGTGYAYHKKRNALRATEDAKKAAAKIAPAVTTASEAEQNLADLLNLAGGEE.

Zn(2+)-binding residues include Cys-70, Cys-72, Cys-85, and Cys-88. Residues Asp-460, Asp-462, and Asp-464 each contribute to the Mg(2+) site. Zn(2+) contacts are provided by Cys-814, Cys-888, Cys-895, and Cys-898.

The protein belongs to the RNA polymerase beta' chain family. In terms of assembly, the RNAP catalytic core consists of 2 alpha, 1 beta, 1 beta' and 1 omega subunit. When a sigma factor is associated with the core the holoenzyme is formed, which can initiate transcription. Requires Mg(2+) as cofactor. It depends on Zn(2+) as a cofactor.

It carries out the reaction RNA(n) + a ribonucleoside 5'-triphosphate = RNA(n+1) + diphosphate. Functionally, DNA-dependent RNA polymerase catalyzes the transcription of DNA into RNA using the four ribonucleoside triphosphates as substrates. The chain is DNA-directed RNA polymerase subunit beta' from Shewanella denitrificans (strain OS217 / ATCC BAA-1090 / DSM 15013).